We begin with the raw amino-acid sequence, 346 residues long: S-adenosylmethionine:tRNA ribosyltransferase-isomerase (346 aa).

The protein belongs to the QueA family. Monomer.

It localises to the cytoplasm. It catalyses the reaction 7-aminomethyl-7-carbaguanosine(34) in tRNA + S-adenosyl-L-methionine = epoxyqueuosine(34) in tRNA + adenine + L-methionine + 2 H(+). The protein operates within tRNA modification; tRNA-queuosine biosynthesis. Its function is as follows. Transfers and isomerizes the ribose moiety from AdoMet to the 7-aminomethyl group of 7-deazaguanine (preQ1-tRNA) to give epoxyqueuosine (oQ-tRNA). The protein is S-adenosylmethionine:tRNA ribosyltransferase-isomerase of Chloroherpeton thalassium (strain ATCC 35110 / GB-78).